The following is a 264-amino-acid chain: Outer kinetochore KNL1 complex subunit sos7 (264 aa).

A coiled-coil region spans residues 90–236 (EAEDNEKLET…SNQIKAAIHT (147 aa)).

This sequence belongs to the KRE28 family. Component of the KNL1/SPC105 complex composed of at least spc7 and sos7. Part of the outer kinetochore KMN network that includes the KNL1, MIS12 and NDC80 complexes. Interacts (via C-terminus) with spc7 (via C-terminus); the interaction is direct.

It localises to the nucleus. The protein resides in the chromosome. The protein localises to the centromere. It is found in the kinetochore. Acts as a component of the outer kinetochore KNL1 complex that facilitates microtubule-kinetochore interactions and the spindle assembly checkpoint. Kinetochores, consisting of a centromere-associated inner segment and a microtubule-contacting outer segment, play a crucial role in chromosome segregation by mediating the physical connection between centromeric DNA and spindle microtubules. The outer kinetochore is made up of the ten-subunit KMN network, comprising the MIS12, NDC80 and KNL1 complexes, and auxiliary microtubule-associated components; together they connect the outer kinetochore with the inner kinetochore, bind microtubules, and mediate interactions with mitotic checkpoint proteins that delay anaphase until chromosomes are bioriented on the spindle. The chain is Outer kinetochore KNL1 complex subunit sos7 (sos7) from Schizosaccharomyces pombe (strain 972 / ATCC 24843) (Fission yeast).